The primary structure comprises 199 residues: CASP-like protein 1B2 (199 aa).

Topologically, residues 1 to 22 are cytoplasmic; that stretch reads MALQSEEKLEVGYSSLQPKTRK. Residues 23–43 traverse the membrane as a helical segment; it reads WVLLMLRVLAFFATAAATVVM. The Extracellular segment spans residues 44–74; it reads GLNKETKTLVVATVGSTPIKASLAAKFQHTP. Residues 75–95 traverse the membrane as a helical segment; sequence AFVFFVIANGLASIHNLVMIM. Topologically, residues 96–112 are cytoplasmic; sequence GDLFGQKLDYKGLRLAM. Residues 113–133 traverse the membrane as a helical segment; that stretch reads IAILDMMTVALVSGGVSAAAF. Topologically, residues 134 to 163 are extracellular; it reads MAELGKNGNSHARWNKICDKFETFCDHGGG. Residues 164-184 form a helical membrane-spanning segment; the sequence is ALIASFAGLILMLIISVMSII. At 185–199 the chain is on the cytoplasmic side; it reads KLLIKPKPDSTIVVP.

Belongs to the Casparian strip membrane proteins (CASP) family. Homodimer and heterodimers.

It localises to the cell membrane. This is CASP-like protein 1B2 from Populus trichocarpa (Western balsam poplar).